The primary structure comprises 460 residues: SPbeta prophage-derived uncharacterized protein YopQ (460 aa).

The protein is SPbeta prophage-derived uncharacterized protein YopQ (yopQ) of Bacillus subtilis (strain 168).